The primary structure comprises 362 residues: Histidine biosynthesis bifunctional protein HisB (362 aa).

The histidinol-phosphatase stretch occupies residues 1–173; the sequence is MQPTLFIDRD…TVTNCGKRPP (173 aa). Catalysis depends on D8, which acts as the Nucleophile. Mg(2+)-binding residues include D8 and D10. The active-site Proton donor is the D10. Zn(2+) contacts are provided by C91, H93, C99, and C101. D128 serves as a coordination point for Mg(2+). The tract at residues 174–362 is imidazoleglycerol-phosphate dehydratase; that stretch reads RFAEVIRQTK…NEMPSSKGVL (189 aa).

The protein in the N-terminal section; belongs to the histidinol-phosphatase family. This sequence in the C-terminal section; belongs to the imidazoleglycerol-phosphate dehydratase family. Mg(2+) serves as cofactor. Zn(2+) is required as a cofactor.

It is found in the cytoplasm. The catalysed reaction is D-erythro-1-(imidazol-4-yl)glycerol 3-phosphate = 3-(imidazol-4-yl)-2-oxopropyl phosphate + H2O. It catalyses the reaction L-histidinol phosphate + H2O = L-histidinol + phosphate. Its pathway is amino-acid biosynthesis; L-histidine biosynthesis; L-histidine from 5-phospho-alpha-D-ribose 1-diphosphate: step 6/9. It functions in the pathway amino-acid biosynthesis; L-histidine biosynthesis; L-histidine from 5-phospho-alpha-D-ribose 1-diphosphate: step 8/9. The chain is Histidine biosynthesis bifunctional protein HisB from Haemophilus influenzae (strain 86-028NP).